The chain runs to 197 residues: dITP/XTP pyrophosphatase (197 aa).

Position 9–14 (9–14) interacts with substrate; the sequence is SNNAGK. Catalysis depends on aspartate 70, which acts as the Proton acceptor. Residue aspartate 70 participates in Mg(2+) binding. Residues serine 71, 153–156, lysine 176, and 181–182 contribute to the substrate site; these read FGYD and HR.

The protein belongs to the HAM1 NTPase family. In terms of assembly, homodimer. The cofactor is Mg(2+).

It carries out the reaction XTP + H2O = XMP + diphosphate + H(+). The catalysed reaction is dITP + H2O = dIMP + diphosphate + H(+). It catalyses the reaction ITP + H2O = IMP + diphosphate + H(+). Its function is as follows. Pyrophosphatase that catalyzes the hydrolysis of nucleoside triphosphates to their monophosphate derivatives, with a high preference for the non-canonical purine nucleotides XTP (xanthosine triphosphate), dITP (deoxyinosine triphosphate) and ITP. Seems to function as a house-cleaning enzyme that removes non-canonical purine nucleotides from the nucleotide pool, thus preventing their incorporation into DNA/RNA and avoiding chromosomal lesions. The sequence is that of dITP/XTP pyrophosphatase from Chromobacterium violaceum (strain ATCC 12472 / DSM 30191 / JCM 1249 / CCUG 213 / NBRC 12614 / NCIMB 9131 / NCTC 9757 / MK).